A 226-amino-acid chain; its full sequence is Phosphatidylserine decarboxylase proenzyme (226 aa).

Catalysis depends on S184, which acts as the Schiff-base intermediate with substrate; via pyruvic acid. A Pyruvic acid (Ser); by autocatalysis modification is found at S184.

This sequence belongs to the phosphatidylserine decarboxylase family. PSD-A subfamily. In terms of assembly, heterodimer of a large membrane-associated beta subunit and a small pyruvoyl-containing alpha subunit. Requires pyruvate as cofactor. Post-translationally, is synthesized initially as an inactive proenzyme. Formation of the active enzyme involves a self-maturation process in which the active site pyruvoyl group is generated from an internal serine residue via an autocatalytic post-translational modification. Two non-identical subunits are generated from the proenzyme in this reaction, and the pyruvate is formed at the N-terminus of the alpha chain, which is derived from the carboxyl end of the proenzyme. The post-translation cleavage follows an unusual pathway, termed non-hydrolytic serinolysis, in which the side chain hydroxyl group of the serine supplies its oxygen atom to form the C-terminus of the beta chain, while the remainder of the serine residue undergoes an oxidative deamination to produce ammonia and the pyruvoyl prosthetic group on the alpha chain.

The protein resides in the cell membrane. It catalyses the reaction a 1,2-diacyl-sn-glycero-3-phospho-L-serine + H(+) = a 1,2-diacyl-sn-glycero-3-phosphoethanolamine + CO2. The protein operates within phospholipid metabolism; phosphatidylethanolamine biosynthesis; phosphatidylethanolamine from CDP-diacylglycerol: step 2/2. Catalyzes the formation of phosphatidylethanolamine (PtdEtn) from phosphatidylserine (PtdSer). The chain is Phosphatidylserine decarboxylase proenzyme from Ehrlichia canis (strain Jake).